Here is a 355-residue protein sequence, read N- to C-terminus: Isopentenyl-diphosphate delta-isomerase (355 aa).

6-7 is a binding site for substrate; sequence RK. Residues 62–64, Ser-93, and Asn-122 contribute to the FMN site; that span reads AMT. Residue Gln-152 coordinates substrate. Position 153 (Glu-153) interacts with Mg(2+). FMN-binding positions include Lys-184, Thr-214, 258–259, and 280–281; these read GG and AG.

It belongs to the IPP isomerase type 2 family. In terms of assembly, homooctamer. Dimer of tetramers. FMN is required as a cofactor. NADPH serves as cofactor. The cofactor is Mg(2+).

It localises to the cytoplasm. The enzyme catalyses isopentenyl diphosphate = dimethylallyl diphosphate. Its function is as follows. Involved in the biosynthesis of isoprenoids. Catalyzes the 1,3-allylic rearrangement of the homoallylic substrate isopentenyl (IPP) to its allylic isomer, dimethylallyl diphosphate (DMAPP). This chain is Isopentenyl-diphosphate delta-isomerase, found in Bacillus pumilus (strain SAFR-032).